The sequence spans 350 residues: Ribosomal RNA large subunit methyltransferase M (350 aa).

Residues 217–220, aspartate 236, aspartate 256, and aspartate 272 contribute to the S-adenosyl-L-methionine site; that span reads APGG. Residue lysine 301 is the Proton acceptor of the active site.

Belongs to the class I-like SAM-binding methyltransferase superfamily. RNA methyltransferase RlmE family. RlmM subfamily. As to quaternary structure, monomer.

The protein resides in the cytoplasm. It carries out the reaction cytidine(2498) in 23S rRNA + S-adenosyl-L-methionine = 2'-O-methylcytidine(2498) in 23S rRNA + S-adenosyl-L-homocysteine + H(+). Its function is as follows. Catalyzes the 2'-O-methylation at nucleotide C2498 in 23S rRNA. The protein is Ribosomal RNA large subunit methyltransferase M of Cellvibrio japonicus (strain Ueda107) (Pseudomonas fluorescens subsp. cellulosa).